The primary structure comprises 495 residues: FK506-binding protein 4 (495 aa).

3 disordered regions span residues 115 to 198 (GSDD…ADLE), 243 to 312 (MDDD…NKRA), and 333 to 385 (KQQK…KPAT). Acidic residues-rich tracts occupy residues 116–126 (SDDEEDSDEEA), 152–161 (AQEESDEEME), 178–196 (ESDD…EGAD), and 243–283 (MDDD…LDGL). Positions 373 to 382 (EKPKQAKDSK) are enriched in basic and acidic residues. The PPIase FKBP-type domain occupies 409–495 (GDTVGVRYIG…IFDVKLLEIK (87 aa)).

This sequence belongs to the FKBP-type PPIase family. FKBP3/4 subfamily. As to quaternary structure, binds to histones H3 and H4.

Its subcellular location is the nucleus. It carries out the reaction [protein]-peptidylproline (omega=180) = [protein]-peptidylproline (omega=0). Its activity is regulated as follows. Inhibited by both FK506 and rapamycin. Functionally, PPIase that acts as a histone chaperone. Histone proline isomerase that increases the rate of cis-trans isomerization at prolines on the histone H3 N-terminal tail. Proline isomerization influences H3 methylation thereby regulating gene expression. In Gibberella zeae (strain ATCC MYA-4620 / CBS 123657 / FGSC 9075 / NRRL 31084 / PH-1) (Wheat head blight fungus), this protein is FK506-binding protein 4 (FPR4).